Here is a 591-residue protein sequence, read N- to C-terminus: Metalloendopeptidase OPG085 (591 aa).

Residue H41 participates in Zn(2+) binding. E44 is a catalytic residue. Positions 45 and 112 each coordinate Zn(2+).

The protein belongs to the peptidase M44 family. Zn(2+) is required as a cofactor. Undergoes proteolytic processing during the course of infection. May be cleaved into 46 kDa and 22 kDa products (Potential).

It is found in the virion. In terms of biological role, probably involved in maturation of some viral proteins by processing them preferentially at Ala-Gly-|-Ser/Thr/Lys motifs. Does not seem to be responsible for the cleavage of major core proteins. In Homo sapiens (Human), this protein is Metalloendopeptidase OPG085 (OPG085).